A 601-amino-acid chain; its full sequence is DNA ligase (601 aa).

Asp-258 is a binding site for ATP. The active-site N6-AMP-lysine intermediate is Lys-260. ATP-binding residues include Arg-265, Arg-280, Glu-310, Phe-350, Arg-427, and Lys-433. The interval 568–601 (DKSPEDATTTDEILEMYNKQPKKKIESPPIDESV) is disordered.

Belongs to the ATP-dependent DNA ligase family. Requires Mg(2+) as cofactor.

It carries out the reaction ATP + (deoxyribonucleotide)n-3'-hydroxyl + 5'-phospho-(deoxyribonucleotide)m = (deoxyribonucleotide)n+m + AMP + diphosphate.. Its function is as follows. DNA ligase that seals nicks in double-stranded DNA during DNA replication, DNA recombination and DNA repair. In Saccharolobus islandicus (strain Y.N.15.51 / Yellowstone #2) (Sulfolobus islandicus), this protein is DNA ligase.